Here is a 59-residue protein sequence, read N- to C-terminus: Potassium channel toxin alpha-KTx 15.2 (59 aa).

The first 22 residues, 1-22, serve as a signal peptide directing secretion; it reads MKFSSIILLTLLICSMSKFGNC. The residue at position 23 (Gln-23) is a Pyrrolidone carboxylic acid. Cystine bridges form between Cys-30-Cys-50, Cys-35-Cys-55, and Cys-39-Cys-57.

Belongs to the short scorpion toxin superfamily. Potassium channel inhibitor family. Alpha-KTx 15 subfamily. In terms of tissue distribution, expressed by the venom gland.

It is found in the secreted. In terms of biological role, blocks both human ERG1/Kv11.1/KCNH2 potassium channels (in a reversible manner) and A-type voltage-gated potassium channels Kv4/KCND (in an irreversible manner). The presence of the Kv4-associated proteins DPP6 or DPP10 is mandatory to have high-affinity blockade of Kv4.2/KCND2 and Kv4.3/KCND3 channels. In contrast, the presence of the Kv4-associated protein KChIP1/KCNIP1 does not enhance the affinity blockade. May dispose of two functional faces (A and B); the two basic residues (Arg-40 and Lys-41) on the alpha-helix side of the peptide that blocks the hERG current (face A) and the typical dyad through which it blocks A-type currents on the beta-sheet side (face B). In adult rat brain, it binds to sites in the striatum, hippocampus, superior colliculus, and cerebellum. It shares the same target in rat brain than AaTX1 (AC Q867F4) and AmmTX3 (AC P60208). In DPP6 knockout mice, A-type currents are much less affected by the toxin than in wild-type mice. This Olivierus martensii (Manchurian scorpion) protein is Potassium channel toxin alpha-KTx 15.2.